We begin with the raw amino-acid sequence, 514 residues long: DNA damage-binding protein CMR1 (514 aa).

A disordered region spans residues 26–116; sequence NLDSLSQSIK…VKQEEKEELS (91 aa). A compositionally biased stretch (basic and acidic residues) spans 34-44; that stretch reads IKRELPRASET. Residues 45–55 are compositionally biased toward basic residues; it reads KKRKTTPRTKA. Basic and acidic residues-rich tracts occupy residues 56 to 65 and 92 to 116; these read VKKEDVEPSR and KFED…EELS. WD repeat units lie at residues 180–221, 229–269, 280–320, 327–367, 385–423, 438–481, and 483–514; these read ISHT…DDSE, PHGK…STEV, DYAL…KPLK, LHDK…KANA, SSRL…LIPD, GRWV…IAHL, and DSVG…YLFE.

This sequence belongs to the WD repeat DDB2/WDR76 family.

Functionally, DNA-binding protein that binds to both single- and double-stranded DNA. Binds preferentially to UV-damaged DNA. May be involved in DNA-metabolic processes. In Scheffersomyces stipitis (strain ATCC 58785 / CBS 6054 / NBRC 10063 / NRRL Y-11545) (Yeast), this protein is DNA damage-binding protein CMR1 (PRW1).